A 118-amino-acid chain; its full sequence is DNA-binding protein inhibitor ID-3 (118 aa).

The bHLH domain occupies 32–84 (SHKGPGVDEPMGLLYDMNGCYSKLKELVPGIPQGSKLSQVEILQHVIDYIFDL).

As to quaternary structure, homodimer. Heterodimer with other HLH proteins. Interacts (via HLH domain) with the bHLH protein hes4/hairy2 (via Orange domain). Interacts with stat3.

It localises to the nucleus. Functionally, transcriptional regulator (lacking a basic DNA binding domain) which negatively regulates the basic helix-loop-helix (bHLH) transcription factors by forming heterodimers and inhibiting their DNA binding and transcriptional activity. Influences cell fate decisions in the embryo by sequestering and blocking the activity of the bHLH transcription factors that control these decisions. Inhibits the binding of myogenic bHLH-containing complexes to E-box DNA, thereby preventing activation of muscle-specific target genes. Also inhibits the activity of neurogenic factor neurod1/neuroD. Plays a role in cell cycle progression and survival of neural crest progenitors; binding to either hes4-B/hairy2b or stat3 blocks the formation of transcription factor complexes and the repressor function of hes4-B/hairy2B, to allow neural crest progenitors to differentiate. May play a role in the regulation of the circadian rhythm. The sequence is that of DNA-binding protein inhibitor ID-3 (id3) from Xenopus tropicalis (Western clawed frog).